Reading from the N-terminus, the 455-residue chain is MAGIIDLASLAPTDTVLKLPHPYLTEYTVQRSDDKLFQLHPKEGSTVQPLPFALHAPHVRFSAPADLKSSELPASANNSLWARSRRSPFSDVRWESDAAAPTLAQAWLLLYVLFTVRPGMELVRLQLSGPGADVLSQQLREVLLGIAHPPPPPKSQAAAPEQATTETSSTVVVLRSTFWQGAGSPFGPRPVWCPDASPSSLPASTPLSQFPTTPLQHTITVASAGDPQDPDRYQQSLHPIRPAKPAPGAVIYSRWVPHLKETFSMVSVDYTDAEHLRLFHEWQNDPRVSQGWNETGTLEQHREYLRKIHEDPHQVALLAKWDDAYFAYFEIYWAKEDRLGGYYDAQDYDRGRHSLVGDVKFRGPHRVTAWWSSLMHYLFLDDPRTMWVVGEPKDTNAIPVMYDLIHGFGLEKFVDLPHKRSALVRCPRVRFFQLCPLGAQEKAVGGVNIGLVPKL.

The PTS1-type peroxisomal targeting signal signature appears at 453 to 455; that stretch reads PKL.

Belongs to the lysine N-acyltransferase mbtK family.

Its subcellular location is the peroxisome. It functions in the pathway siderophore biosynthesis. Hydroxyornithine transacylase; part of the gene cluster that mediates the biosynthesis of at least 11 siderophores, including beauverichelin A, dimerumic acid (DA), Na-dimethyl coprogen (NADC), eleutherazine B, ferricrocin (FC), fusarinine A, fusarinine C (FsC), metachelin A, mevalonolactone, rhodotorulic acid (RA) and tenellin. This cocktail of siderophores for iron metabolism is essential for virulence, and more specifically for the fungal virulence in penetrating through the host cuticle. Siderophore synthesis is also involved in conidial germination under iron-deficient conditions. For biosynthesis of fusarinine C, the transacylase SIDF transfers anhydromevalonyl to N(5)-hydroxyornithine. The required anhydromevalonyl-CoA moiety is derived from mevalonate by CoA ligation and dehydration catalyzed by SIDI and sidH respectively. This Beauveria bassiana (strain ARSEF 2860) (White muscardine disease fungus) protein is N(5)-hydroxyornithine:cis-anhydromevalonyl coenzyme A-N(5)-transacylase SIDF.